The following is a 176-amino-acid chain: Endoribonuclease YbeY (176 aa).

Residues His-138, His-142, and His-148 each coordinate Zn(2+).

The protein belongs to the endoribonuclease YbeY family. The cofactor is Zn(2+).

It is found in the cytoplasm. Single strand-specific metallo-endoribonuclease involved in late-stage 70S ribosome quality control and in maturation of the 3' terminus of the 16S rRNA. In Trichormus variabilis (strain ATCC 29413 / PCC 7937) (Anabaena variabilis), this protein is Endoribonuclease YbeY.